We begin with the raw amino-acid sequence, 290 residues long: Acetylglutamate kinase (290 aa).

Substrate is bound by residues 65 to 66 (GG), R87, and N186.

Belongs to the acetylglutamate kinase family. ArgB subfamily.

Its subcellular location is the cytoplasm. It catalyses the reaction N-acetyl-L-glutamate + ATP = N-acetyl-L-glutamyl 5-phosphate + ADP. It functions in the pathway amino-acid biosynthesis; L-arginine biosynthesis; N(2)-acetyl-L-ornithine from L-glutamate: step 2/4. Its function is as follows. Catalyzes the ATP-dependent phosphorylation of N-acetyl-L-glutamate. The chain is Acetylglutamate kinase from Mycobacterium sp. (strain KMS).